We begin with the raw amino-acid sequence, 419 residues long: Probable 3-isopropylmalate dehydratase large subunit (419 aa).

Residues Cys299, Cys359, and Cys362 each coordinate [4Fe-4S] cluster.

The protein belongs to the aconitase/IPM isomerase family. LeuC type 2 subfamily. Heterodimer of LeuC and LeuD. Requires [4Fe-4S] cluster as cofactor.

The enzyme catalyses (2R,3S)-3-isopropylmalate = (2S)-2-isopropylmalate. The protein operates within amino-acid biosynthesis; L-leucine biosynthesis; L-leucine from 3-methyl-2-oxobutanoate: step 2/4. Its function is as follows. Catalyzes the isomerization between 2-isopropylmalate and 3-isopropylmalate, via the formation of 2-isopropylmaleate. This is Probable 3-isopropylmalate dehydratase large subunit from Methanothermobacter thermautotrophicus (strain ATCC 29096 / DSM 1053 / JCM 10044 / NBRC 100330 / Delta H) (Methanobacterium thermoautotrophicum).